The sequence spans 210 residues: Thymidylate kinase (210 aa).

11-18 (GVDGAGKT) contributes to the ATP binding site.

The protein belongs to the thymidylate kinase family.

The enzyme catalyses dTMP + ATP = dTDP + ADP. In terms of biological role, phosphorylation of dTMP to form dTDP in both de novo and salvage pathways of dTTP synthesis. The chain is Thymidylate kinase (tmk) from Mycoplasma pneumoniae (strain ATCC 29342 / M129 / Subtype 1) (Mycoplasmoides pneumoniae).